Here is a 312-residue protein sequence, read N- to C-terminus: Glyoxylate/hydroxypyruvate reductase A (312 aa).

Arginine 227 is an active-site residue. Residue histidine 275 is the Proton donor of the active site.

Belongs to the D-isomer specific 2-hydroxyacid dehydrogenase family. GhrA subfamily.

The protein resides in the cytoplasm. It carries out the reaction glycolate + NADP(+) = glyoxylate + NADPH + H(+). It catalyses the reaction (R)-glycerate + NAD(+) = 3-hydroxypyruvate + NADH + H(+). The catalysed reaction is (R)-glycerate + NADP(+) = 3-hydroxypyruvate + NADPH + H(+). Functionally, catalyzes the NADPH-dependent reduction of glyoxylate and hydroxypyruvate into glycolate and glycerate, respectively. The polypeptide is Glyoxylate/hydroxypyruvate reductase A (Salmonella agona (strain SL483)).